A 1997-amino-acid polypeptide reads, in one-letter code: Chromatin-remodeling ATPase INO80 (1997 aa).

3 disordered regions span residues 1-378 (MDHF…AAPS), 397-579 (IAAP…AENE), and 674-858 (ERKK…EKVV). The segment covering 12 to 25 (PHFDEDGTEGRGDR) has biased composition (basic and acidic residues). Residues 32–41 (GPAPPPPPPR) are compositionally biased toward pro residues. Residues 49–64 (NPVSSNSAVQSQAAAA) show a composition bias toward low complexity. Residues 89 to 107 (STNSMRATPHSSSSFNLRS) are compositionally biased toward polar residues. Positions 108–117 (PTREPSEYRH) are enriched in basic and acidic residues. Low complexity-rich tracts occupy residues 118–156 (PLSSLATPAPFAASPPTSIANANNTNNNNALGAAGSLSS), 203–230 (SLQAPPAITPIAGLSAPAPASGSLPLSA), and 240–251 (SSSSQPPARASQ). Residues 264–276 (SFRDRDSSVREKS) are compositionally biased toward basic and acidic residues. A compositionally biased stretch (polar residues) spans 288–297 (EASNGISGSS). Basic and acidic residues predominate over residues 298–317 (PRKDRDRDRDHRGTTRESQR). 2 stretches are compositionally biased toward polar residues: residues 318–340 (RSVSGHSDTGSSWRNATQTSASN) and 366–378 (VDNTTSSSIAAPS). Low complexity predominate over residues 411-420 (SPRLSLRPPS). Composition is skewed to polar residues over residues 433–442 (NPTNGTTSTA), 451–465 (SPPSKMSPGTSTNPS), and 472–481 (SFSNILSSSE). Basic and acidic residues-rich tracts occupy residues 500 to 519 (VPMKVERADSSEKVVKEKKE) and 529 to 540 (RISDIRHSESTP). Residues 666–735 (ERELFAEKER…VQQTRLILQK (70 aa)) are a coiled coil. The span at 689–707 (MATTMEAKAAALARASAAQ) shows a compositional bias: low complexity. Residues 709–723 (EAERQKYMREAERAN) show a composition bias toward basic and acidic residues. The segment covering 769 to 781 (TKGKGRAGARPKK) has biased composition (basic residues). Over residues 782–793 (SKEQKQAEKDAA) the composition is skewed to basic and acidic residues. A compositionally biased stretch (low complexity) spans 794 to 806 (EAAQAALDAGLEL). A compositionally biased stretch (basic and acidic residues) spans 824-858 (APKEADVDKDKENKEPQEPKEPKEPKEKVIKEKVV). Residues 881 to 1006 (IWRDLARKDV…SHFIGKKIKT (126 aa)) enclose the DBINO domain. In terms of domain architecture, Helicase ATP-binding spans 1130–1302 (VNLYEQGING…WALLHFIMPS (173 aa)). An ATP-binding site is contributed by 1143 to 1150 (DEMGLGKT). Residues 1253-1256 (DEAQ) carry the DEAQ box motif. Residues 1702–1858 (KLDELLRELK…GSSAAGGGVD (157 aa)) enclose the Helicase C-terminal domain. Residues 1891-1902 (ELLESGELDKMQ) show a composition bias toward basic and acidic residues. Positions 1891-1986 (ELLESGELDK…GSKKAKTTKQ (96 aa)) are disordered. Basic residues predominate over residues 1903-1914 (KKSRGGNKRKRG). Basic and acidic residues predominate over residues 1919 to 1933 (EGKEVSLDEMYHEGE). Residues 1954 to 1967 (AAGGEGGDGKGAVG) are compositionally biased toward gly residues. Over residues 1970 to 1985 (AKKRKTGGSKKAKTTK) the composition is skewed to basic residues.

This sequence belongs to the SNF2/RAD54 helicase family. In terms of assembly, component of the INO80 chromatin-remodeling complex.

Its subcellular location is the nucleus. The enzyme catalyses ATP + H2O = ADP + phosphate + H(+). Its function is as follows. ATPase component of the INO80 complex which remodels chromatin by shifting nucleosomes and is involved in DNA repair. The polypeptide is Chromatin-remodeling ATPase INO80 (crf2-1) (Neurospora crassa (strain ATCC 24698 / 74-OR23-1A / CBS 708.71 / DSM 1257 / FGSC 987)).